Consider the following 315-residue polypeptide: Aspartate carbamoyltransferase catalytic subunit (315 aa).

Positions 55 and 56 each coordinate carbamoyl phosphate. Residue Lys-83 participates in L-aspartate binding. Positions 105, 138, and 141 each coordinate carbamoyl phosphate. Residues Arg-171 and Arg-225 each coordinate L-aspartate. Residues Gly-266 and Pro-267 each contribute to the carbamoyl phosphate site.

It belongs to the aspartate/ornithine carbamoyltransferase superfamily. ATCase family. As to quaternary structure, heterododecamer (2C3:3R2) of six catalytic PyrB chains organized as two trimers (C3), and six regulatory PyrI chains organized as three dimers (R2).

It carries out the reaction carbamoyl phosphate + L-aspartate = N-carbamoyl-L-aspartate + phosphate + H(+). It participates in pyrimidine metabolism; UMP biosynthesis via de novo pathway; (S)-dihydroorotate from bicarbonate: step 2/3. In terms of biological role, catalyzes the condensation of carbamoyl phosphate and aspartate to form carbamoyl aspartate and inorganic phosphate, the committed step in the de novo pyrimidine nucleotide biosynthesis pathway. This Mycolicibacterium vanbaalenii (strain DSM 7251 / JCM 13017 / BCRC 16820 / KCTC 9966 / NRRL B-24157 / PYR-1) (Mycobacterium vanbaalenii) protein is Aspartate carbamoyltransferase catalytic subunit.